The primary structure comprises 759 residues: Multifunctional tryptophan biosynthesis protein (759 aa).

Residues 27 to 223 enclose the Glutamine amidotransferase type-1 domain; sequence PIVMIDNYDS…LNLTAGTWEE (197 aa). 80–82 provides a ligand contact to L-glutamine; it reads GPG. Cysteine 108 acts as the Nucleophile; for GATase activity in catalysis. L-glutamine contacts are provided by residues glutamine 112 and 158–159; that span reads SL. Catalysis depends on for GATase activity residues histidine 197 and glutamate 199. The segment at 257-519 is indole-3-glycerol phosphate synthase; that stretch reads ILEKIHAQRL…DPAAFARELL (263 aa). The segment at 536-759 is N-(5'-phosphoribosyl)anthranilate isomerase; sequence LVKVCGTRSL…KAFINAVKEL (224 aa).

The enzyme catalyses N-(5-phospho-beta-D-ribosyl)anthranilate = 1-(2-carboxyphenylamino)-1-deoxy-D-ribulose 5-phosphate. It catalyses the reaction 1-(2-carboxyphenylamino)-1-deoxy-D-ribulose 5-phosphate + H(+) = (1S,2R)-1-C-(indol-3-yl)glycerol 3-phosphate + CO2 + H2O. It carries out the reaction chorismate + L-glutamine = anthranilate + pyruvate + L-glutamate + H(+). It participates in amino-acid biosynthesis; L-tryptophan biosynthesis; L-tryptophan from chorismate: step 1/5. Its pathway is amino-acid biosynthesis; L-tryptophan biosynthesis; L-tryptophan from chorismate: step 3/5. The protein operates within amino-acid biosynthesis; L-tryptophan biosynthesis; L-tryptophan from chorismate: step 4/5. Its function is as follows. Trifunctional enzyme bearing the Gln amidotransferase (GATase) domain of anthranilate synthase, indole-glycerolphosphate synthase, and phosphoribosylanthranilate isomerase activities. This Schizosaccharomyces pombe (strain 972 / ATCC 24843) (Fission yeast) protein is Multifunctional tryptophan biosynthesis protein (trp1).